Consider the following 262-residue polypeptide: Polyamine aminopropyltransferase (262 aa).

A PABS domain is found at 1 to 249; sequence MWITQEITPY…DIHRAAFALP (249 aa). N29 provides a ligand contact to S-methyl-5'-thioadenosine. D83 provides a ligand contact to spermidine. D155 (proton acceptor) is an active-site residue.

Belongs to the spermidine/spermine synthase family. In terms of assembly, homodimer or homotetramer.

The protein resides in the cytoplasm. The catalysed reaction is S-adenosyl 3-(methylsulfanyl)propylamine + putrescine = S-methyl-5'-thioadenosine + spermidine + H(+). It participates in amine and polyamine biosynthesis; spermidine biosynthesis; spermidine from putrescine: step 1/1. Its function is as follows. Catalyzes the irreversible transfer of a propylamine group from the amino donor S-adenosylmethioninamine (decarboxy-AdoMet) to putrescine (1,4-diaminobutane) to yield spermidine. In Helicobacter acinonychis (strain Sheeba), this protein is Polyamine aminopropyltransferase.